The primary structure comprises 70 residues: Large ribosomal subunit protein eL43 (70 aa).

Residues Cys36, Cys39, Cys55, and Cys58 each coordinate Zn(2+). The C4-type zinc-finger motif lies at Cys36–Cys58.

Belongs to the eukaryotic ribosomal protein eL43 family. Putative zinc-binding subfamily. As to quaternary structure, part of the 50S ribosomal subunit. Zn(2+) is required as a cofactor.

Binds to the 23S rRNA. The polypeptide is Large ribosomal subunit protein eL43 (Sulfurisphaera tokodaii (strain DSM 16993 / JCM 10545 / NBRC 100140 / 7) (Sulfolobus tokodaii)).